Here is a 215-residue protein sequence, read N- to C-terminus: Thiamine-phosphate synthase (215 aa).

Residues 37–41 (QLRIK) and N69 contribute to the 4-amino-2-methyl-5-(diphosphooxymethyl)pyrimidine site. Mg(2+) contacts are provided by D70 and D89. 4-amino-2-methyl-5-(diphosphooxymethyl)pyrimidine is bound at residue S108. Position 134 to 136 (134 to 136 (TQT)) interacts with 2-[(2R,5Z)-2-carboxy-4-methylthiazol-5(2H)-ylidene]ethyl phosphate. K137 is a binding site for 4-amino-2-methyl-5-(diphosphooxymethyl)pyrimidine. Residues G166 and 186 to 187 (VS) contribute to the 2-[(2R,5Z)-2-carboxy-4-methylthiazol-5(2H)-ylidene]ethyl phosphate site.

The protein belongs to the thiamine-phosphate synthase family. Requires Mg(2+) as cofactor.

It catalyses the reaction 2-[(2R,5Z)-2-carboxy-4-methylthiazol-5(2H)-ylidene]ethyl phosphate + 4-amino-2-methyl-5-(diphosphooxymethyl)pyrimidine + 2 H(+) = thiamine phosphate + CO2 + diphosphate. The enzyme catalyses 2-(2-carboxy-4-methylthiazol-5-yl)ethyl phosphate + 4-amino-2-methyl-5-(diphosphooxymethyl)pyrimidine + 2 H(+) = thiamine phosphate + CO2 + diphosphate. The catalysed reaction is 4-methyl-5-(2-phosphooxyethyl)-thiazole + 4-amino-2-methyl-5-(diphosphooxymethyl)pyrimidine + H(+) = thiamine phosphate + diphosphate. It functions in the pathway cofactor biosynthesis; thiamine diphosphate biosynthesis; thiamine phosphate from 4-amino-2-methyl-5-diphosphomethylpyrimidine and 4-methyl-5-(2-phosphoethyl)-thiazole: step 1/1. In terms of biological role, condenses 4-methyl-5-(beta-hydroxyethyl)thiazole monophosphate (THZ-P) and 2-methyl-4-amino-5-hydroxymethyl pyrimidine pyrophosphate (HMP-PP) to form thiamine monophosphate (TMP). This Yersinia pestis (strain Pestoides F) protein is Thiamine-phosphate synthase.